A 178-amino-acid chain; its full sequence is Mediator of RNA polymerase II transcription subunit 28 (178 aa).

Positions Met1–Gly25 are disordered. The stretch at Gln109 to Asp145 forms a coiled coil.

Belongs to the Mediator complex subunit 28 family. As to quaternary structure, component of the Mediator complex, which is composed of MED1, MED4, MED6, MED7, MED8, MED9, MED10, MED11, MED12, MED13, MED13L, MED14, MED15, MED16, MED17, MED18, MED19, MED20, MED21, MED22, MED23, MED24, MED25, MED26, MED27, MED29, MED30, MED31, CCNC, CDK8 and CDC2L6/CDK11. The MED12, MED13, CCNC and CDK8 subunits form a distinct module termed the CDK8 module. Mediator containing the CDK8 module is less active than Mediator lacking this module in supporting transcriptional activation. Individual preparations of the Mediator complex lacking one or more distinct subunits have been variously termed ARC, CRSP, DRIP, PC2, SMCC and TRAP. Forms a ternary complex with NF2/merlin and GRB2. Binds to actin.

The protein resides in the nucleus. It is found in the cytoplasm. The protein localises to the membrane. Its function is as follows. Component of the Mediator complex, a coactivator involved in the regulated transcription of nearly all RNA polymerase II-dependent genes. Mediator functions as a bridge to convey information from gene-specific regulatory proteins to the basal RNA polymerase II transcription machinery. Mediator is recruited to promoters by direct interactions with regulatory proteins and serves as a scaffold for the assembly of a functional preinitiation complex with RNA polymerase II and the general transcription factors. May be part of a complex containing NF2/merlin that participates in cellular signaling to the actin cytoskeleton downstream of tyrosine kinase signaling pathways. This is Mediator of RNA polymerase II transcription subunit 28 (MED28) from Bos taurus (Bovine).